The chain runs to 612 residues: GPI mannosyltransferase 3 (612 aa).

Helical transmembrane passes span 92-112 (LLAI…AGLM) and 145-165 (VIYA…YFTI). Asparagine 188 carries an N-linked (GlcNAc...) asparagine glycan. 3 helical membrane passes run 192-212 (IALL…RTFI), 254-274 (RPSN…NLLL), and 288-308 (ILVV…YFYN). Residue asparagine 321 is glycosylated (N-linked (GlcNAc...) asparagine). Residues 339–359 (LLQSLPIMLGYSLPLFIYGLF) traverse the membrane as a helical segment. An N-linked (GlcNAc...) asparagine glycan is attached at asparagine 361. 3 consecutive transmembrane segments (helical) span residues 371–391 (FGAL…YSYL), 398–418 (FIYP…LKLA), and 429–449 (EYVW…TTFQ). Residues asparagine 508, asparagine 526, and asparagine 550 are each glycosylated (N-linked (GlcNAc...) asparagine).

It belongs to the glycosyltransferase 22 family. PIGB subfamily.

The protein resides in the endoplasmic reticulum membrane. The protein operates within glycolipid biosynthesis; glycosylphosphatidylinositol-anchor biosynthesis. Mannosyltransferase involved in glycosylphosphatidylinositol-anchor biosynthesis. Transfers the third mannose to Man2-GlcN-acyl-PI during GPI precursor assembly. The polypeptide is GPI mannosyltransferase 3 (GPI10) (Candida glabrata (strain ATCC 2001 / BCRC 20586 / JCM 3761 / NBRC 0622 / NRRL Y-65 / CBS 138) (Yeast)).